Consider the following 248-residue polypeptide: Pyridoxine 5'-phosphate synthase (248 aa).

N12 contributes to the 3-amino-2-oxopropyl phosphate binding site. 14–15 (DH) contributes to the 1-deoxy-D-xylulose 5-phosphate binding site. R23 lines the 3-amino-2-oxopropyl phosphate pocket. The active-site Proton acceptor is the H48. The 1-deoxy-D-xylulose 5-phosphate site is built by R50 and H55. Residue E75 is the Proton acceptor of the active site. T105 is a binding site for 1-deoxy-D-xylulose 5-phosphate. The active-site Proton donor is H196. Residues G197 and 218–219 (GH) contribute to the 3-amino-2-oxopropyl phosphate site.

This sequence belongs to the PNP synthase family. Homooctamer; tetramer of dimers.

Its subcellular location is the cytoplasm. It catalyses the reaction 3-amino-2-oxopropyl phosphate + 1-deoxy-D-xylulose 5-phosphate = pyridoxine 5'-phosphate + phosphate + 2 H2O + H(+). Its pathway is cofactor biosynthesis; pyridoxine 5'-phosphate biosynthesis; pyridoxine 5'-phosphate from D-erythrose 4-phosphate: step 5/5. Functionally, catalyzes the complicated ring closure reaction between the two acyclic compounds 1-deoxy-D-xylulose-5-phosphate (DXP) and 3-amino-2-oxopropyl phosphate (1-amino-acetone-3-phosphate or AAP) to form pyridoxine 5'-phosphate (PNP) and inorganic phosphate. The sequence is that of Pyridoxine 5'-phosphate synthase from Pseudomonas paraeruginosa (strain DSM 24068 / PA7) (Pseudomonas aeruginosa (strain PA7)).